The chain runs to 573 residues: 2-isopropylmalate synthase (573 aa).

The 278-residue stretch at 37–314 folds into the Pyruvate carboxyltransferase domain; it reads PRWLSTDLRD…DPQIDFSDID (278 aa). Mg(2+)-binding residues include Asp-46, His-253, His-255, and Asn-289. Residues 456–573 form a regulatory domain region; that stretch reads NPDNPWGRIQ…VVSAVNRATR (118 aa).

It belongs to the alpha-IPM synthase/homocitrate synthase family. LeuA type 2 subfamily. As to quaternary structure, homodimer. Mg(2+) serves as cofactor.

The protein localises to the cytoplasm. It catalyses the reaction 3-methyl-2-oxobutanoate + acetyl-CoA + H2O = (2S)-2-isopropylmalate + CoA + H(+). It functions in the pathway amino-acid biosynthesis; L-leucine biosynthesis; L-leucine from 3-methyl-2-oxobutanoate: step 1/4. Catalyzes the condensation of the acetyl group of acetyl-CoA with 3-methyl-2-oxobutanoate (2-ketoisovalerate) to form 3-carboxy-3-hydroxy-4-methylpentanoate (2-isopropylmalate). The protein is 2-isopropylmalate synthase of Streptomyces coelicolor (strain ATCC BAA-471 / A3(2) / M145).